The following is a 289-amino-acid chain: Probable aquaporin PIP-type 7a (289 aa).

Positions 1–39 (MEAKEQDVSLGANKFPERQPLGIAAQSQDEPKDYQEPPP) are disordered. The Cytoplasmic segment spans residues 1–57 (MEAKEQDVSLGANKFPERQPLGIAAQSQDEPKDYQEPPPAPLFEPSELTSWSFYRAG). The chain crosses the membrane as a helical span at residues 58–78 (IAEFIATFLFLYITVLTVMGV). The Extracellular segment spans residues 79-91 (VRESSKCKTVGIQ). The chain crosses the membrane as a helical span at residues 92–112 (GIAWAFGGMIFALVYCTAGIS). Residues 113 to 135 (GGHINPAVTFGLFLARKLSLTRA) lie on the Cytoplasmic side of the membrane. Positions 117-119 (NPA) match the NPA 1 motif. The chain crosses the membrane as a helical span at residues 136–156 (IFYMVMQVLGAICGAGVVKGF). The Extracellular portion of the chain corresponds to 157–178 (EGKQRFGDLNGGANFVAPGYTK). Residues 179-199 (GDGLGAEIVGTFILVYTVFSA) traverse the membrane as a helical segment. Residues 200 to 212 (TDAKRSARDSHVP) lie on the Cytoplasmic side of the membrane. A helical transmembrane segment spans residues 213-233 (ILAPLPIGFAVFLVHLATIPI). The Extracellular segment spans residues 234-260 (TGTGINPARSLGAAIVFNKKIGWNDHW). An NPA 2 motif is present at residues 239–241 (NPA). The chain crosses the membrane as a helical span at residues 261–281 (IFWVGPFIGAALAALYHQVVI). Over 282-289 (RAIPFKSK) the chain is Cytoplasmic.

Belongs to the MIP/aquaporin (TC 1.A.8) family. PIP (TC 1.A.8.11) subfamily.

The protein resides in the cell membrane. Aquaporins facilitate the transport of water and small neutral solutes across cell membranes. The polypeptide is Probable aquaporin PIP-type 7a (TRG-31) (Pisum sativum (Garden pea)).